The chain runs to 484 residues: Fumarate hydratase class II (484 aa).

A disordered region spans residues 1-22 (MPSILDLPIGTGATGKRKESDS). Substrate-binding positions include 110–112 (SGT), 141–144 (HPND), 151–153 (SSN), and T199. Catalysis depends on H200, which acts as the Proton donor/acceptor. S330 is an active-site residue. Substrate-binding positions include S331 and 336–338 (KVN).

This sequence belongs to the class-II fumarase/aspartase family. Fumarase subfamily. As to quaternary structure, homotetramer.

The protein resides in the cytoplasm. The catalysed reaction is (S)-malate = fumarate + H2O. It participates in carbohydrate metabolism; tricarboxylic acid cycle; (S)-malate from fumarate: step 1/1. In terms of biological role, involved in the TCA cycle. Catalyzes the stereospecific interconversion of fumarate to L-malate. This Methanosarcina acetivorans (strain ATCC 35395 / DSM 2834 / JCM 12185 / C2A) protein is Fumarate hydratase class II.